The chain runs to 933 residues: Progesterone receptor (933 aa).

The AF3; mediates transcriptional activation stretch occupies residues 1 to 164; it reads MTELKAKGPR…PATQGVLSPL (164 aa). A disordered region spans residues 1-256; the sequence is MTELKAKGPR…AAAGGGAAAV (256 aa). Residues 1 to 566 form a modulating, Pro-Rich region; sequence MTELKAKGPR…YSFESLPQKI (566 aa). Serine 20 carries the phosphoserine modification. An LXXL motif 1 motif is present at residues 55–59; it reads LDGLL. Serine 81 is modified (phosphoserine). An LXXL motif 2 motif is present at residues 115-119; that stretch reads LDTLL. Residues serine 130 and serine 162 each carry the phosphoserine modification. Residues 165–305 form a mediates transcriptional transrepression region; it reads MSRSGCKAGD…LATTMMDFIH (141 aa). The Nuclear localization signal motif lies at 183-187; sequence KVLPR. Residues serine 190 and serine 213 each carry the phosphoserine modification. A compositionally biased stretch (acidic residues) spans 220 to 231; the sequence is EVEEEDGSESEE. Residues 232-246 are compositionally biased toward low complexity; that stretch reads SAGPLLKGKPRALGG. Residue serine 294 is modified to Phosphoserine; by MAPK1. Residues 331–378 are disordered; it reads GGAGAASAFAPPRSSPSASSTPVAVGDFPDCAYPPDAEPKDDAYPLYS. Over residues 335 to 350 the composition is skewed to low complexity; it reads AASAFAPPRSSPSASS. Serine 345 bears the Phosphoserine; by MAPK mark. Lysine 388 participates in a covalent cross-link: Glycyl lysine isopeptide (Lys-Gly) (interchain with G-Cter in SUMO); alternate. Lysine 388 participates in a covalent cross-link: Glycyl lysine isopeptide (Lys-Gly) (interchain with G-Cter in ubiquitin); alternate. Phosphoserine; by CDK2 is present on serine 400. The interval 415–452 is disordered; that stretch reads PDFPLGPPPPLPPRAPPSRPGEAAVTAAPASASVSSAS. Over residues 418 to 433 the composition is skewed to pro residues; sequence PLGPPPPLPPRAPPSR. Low complexity predominate over residues 434–452; that stretch reads PGEAAVTAAPASASVSSAS. The AF1; mediates transcriptional activation stretch occupies residues 456–546; the sequence is STLECILYKA…VYPPYLNYLR (91 aa). A Glycyl lysine isopeptide (Lys-Gly) (interchain with G-Cter in SUMO) cross-link involves residue lysine 531. 2 NR C4-type zinc fingers span residues 567–587 and 603–627; these read CLIC…CGSC and CAGR…LRKC. Positions 567 to 639 form a DNA-binding region, nuclear receptor; it reads CLICGDEASG…AGMVLGGRKF (73 aa). Serine 676 bears the Phosphoserine mark. Positions 679–913 constitute an NR LBD domain; that stretch reads QDIQLIPPLI…EFPEMMSEVI (235 aa). The segment at 687–933 is AF2; mediates transcriptional activation; sequence LINLLMSIEP…MVKPLLFHKK (247 aa). Arginine 766 contacts progesterone.

Belongs to the nuclear hormone receptor family. In terms of assembly, interacts with SMARD1 and UNC45A. Interacts with CUEDC2; the interaction promotes ubiquitination, decreases sumoylation, and represses transcriptional activity. Interacts with PIAS3; the interaction promotes sumoylation of PR in a hormone-dependent manner, inhibits DNA-binding, and alters nuclear export. Interacts with SP1; the interaction requires ligand-induced phosphorylation on Ser-345 by ERK1/2-MAPK. Interacts with PRMT2. Interacts with NCOA2 and NCOA1. Interacts with KLF9. Interacts with GTF2B. In terms of processing, phosphorylated on multiple serine sites. Several of these sites are hormone-dependent. Phosphorylation on Ser-294 is highly hormone-dependent and modulates ubiquitination and sumoylation on Lys-388. Phosphorylation on Ser-102 and Ser-345 also requires induction by hormone. Basal phosphorylation on Ser-81, Ser-162, Ser-190 and Ser-400 is increased in response to progesterone and can be phosphorylated in vitro by the CDK2-A1 complex. Increased levels of phosphorylation on Ser-400 also in the presence of EGF, heregulin, IGF, PMA and FBS. Phosphorylation at this site by CDK2 is ligand-independent, and increases nuclear translocation and transcriptional activity. Phosphorylation at Ser-162 and Ser-294, but not at Ser-190, is impaired during the G(2)/M phase of the cell cycle. Phosphorylation on Ser-345 by ERK1/2 MAPK is required for interaction with SP1. Sumoylation is hormone-dependent and represses transcriptional activity. Sumoylation on all three sites is enhanced by PIAS3. Desumoylated by SENP1. Sumoylation on Lys-388, the main site of sumoylation, is repressed by ubiquitination on the same site, and modulated by phosphorylation at Ser-294. Post-translationally, ubiquitination is hormone-dependent and represses sumoylation on the same site. Promoted by MAPK-mediated phosphorylation on Ser-294. Ubiquitinated by UBR5, leading to its degradation: UBR5 specifically recognizes and binds ligand-bound PGR when it is not associated with coactivators (NCOAs). In presence of NCOAs, the UBR5-degron is not accessible, preventing its ubiquitination and degradation. In terms of processing, palmitoylated by ZDHHC7 and ZDHHC21. Palmitoylation is required for plasma membrane targeting and for rapid intracellular signaling via ERK and AKT kinases and cAMP generation.

It is found in the nucleus. Its subcellular location is the cytoplasm. Its function is as follows. The steroid hormones and their receptors are involved in the regulation of eukaryotic gene expression and affect cellular proliferation and differentiation in target tissues. Transcriptional activator of several progesteron-dependent promoters in a variety of cell types. Involved in activation of SRC-dependent MAPK signaling on hormone stimulation. The protein is Progesterone receptor (PGR) of Pan paniscus (Pygmy chimpanzee).